Here is a 355-residue protein sequence, read N- to C-terminus: C-C chemokine receptor type 1 (355 aa).

Residues methionine 1–alanine 34 lie on the Extracellular side of the membrane. The N-linked (GlcNAc...) asparagine glycan is linked to asparagine 5. 2 disulfides stabilise this stretch: cysteine 24–cysteine 273 and cysteine 106–cysteine 183. A helical transmembrane segment spans residues glutamine 35–valine 60. Residues glutamine 61–arginine 64 are Cytoplasmic-facing. The chain crosses the membrane as a helical span at residues leucine 65–isoleucine 91. Residues aspartate 92–lysine 107 are Extracellular-facing. Residues isoleucine 108–isoleucine 129 form a helical membrane-spanning segment. Over aspartate 130–threonine 146 the chain is Cytoplasmic. Residues valine 147–phenylalanine 171 traverse the membrane as a helical segment. The Extracellular segment spans residues serine 172–leucine 197. The helical transmembrane segment at phenylalanine 198–isoleucine 223 threads the bilayer. Topologically, residues lysine 224–arginine 239 are cytoplasmic. Residues leucine 240–phenylalanine 264 traverse the membrane as a helical segment. The Extracellular segment spans residues glutamine 265–leucine 281. Residues alanine 282–glycine 305 traverse the membrane as a helical segment. At glutamate 306–phenylalanine 355 the chain is on the cytoplasmic side.

The protein belongs to the G-protein coupled receptor 1 family. Interacts with CREB3. Interacts with CCL3. Interacts with CCL15. Interacts with CCL23. Interacts with GNAI1. Interacts with PF4/CXCL4. Widely expressed in different hematopoietic cells.

It localises to the cell membrane. Chemokine receptor that plays a crucial role in regulating immune cell migration, inflammation, and immune responses. Contributes to the inflammatory response by recruiting immune cells, such as monocytes, macrophages, T-cells, and dendritic cells, to sites of inflammation for the clearance of pathogens and the resolution of tissue damage. When activated by its ligands including CCL3, CCL5-9, CCL13-16 and CCL23, triggers a signaling cascade within immune cells, leading to their migration towards the source of the chemokine. For example, mediates neutrophil migration after activation by CCL3 leading to the sequential release of TNF-alpha and leukotriene B4. Also mediates monocyte migration upon CXCL4 binding. Activation by CCL5 results in neuroinflammation through the ERK1/2 signaling pathway. In Homo sapiens (Human), this protein is C-C chemokine receptor type 1 (CCR1).